The chain runs to 338 residues: Increasing suppression factor 1 (338 aa).

Low complexity predominate over residues 50–70 (ENSSKSNNSHHSSSTNAGNTS). Residues 50 to 72 (ENSSKSNNSHHSSSTNAGNTSRH) are disordered. The residue at position 119 (serine 119) is a Phosphoserine. The span at 267–306 (SLLSNGSSSSPLQTRNNSYSNSLVKSPSNSSLNTSVASSN) shows a compositional bias: low complexity. The segment at 267–322 (SLLSNGSSSSPLQTRNNSYSNSLVKSPSNSSLNTSVASSNEESSPHTSNCLEERNP) is disordered. Residues 307–316 (EESSPHTSNC) are compositionally biased toward polar residues.

Belongs to the ISF1/MBR1 family.

Could influence the NAM7/UPF1 function, possibly at the level of mRNA turnover. Participates in mitochondrial biogenesis. The protein is Increasing suppression factor 1 (ISF1) of Saccharomyces cerevisiae (strain JAY291) (Baker's yeast).